Reading from the N-terminus, the 275-residue chain is Peflin (275 aa).

Tandem repeats lie at residues 21-29 (PPGGYYPGP), 31-39 (HGGGQYGSG), 41-49 (PPGGGYGAP), 50-59 (APGGPYGYPS), 60-68 (AGGVPSGTP), 76-84 (PPGGPYGQL), 85-91 (PPGGPYG), and 92-100 (TQPGHYGQG). Disordered regions lie at residues 21–45 (PPGGYYPGPPHGGGQYGSGLPPGGG) and 59–103 (SAGG…GGVP). The tract at residues 21–100 (PPGGYYPGPP…GTQPGHYGQG (80 aa)) is 8 X 9 AA approximate tandem repeat of [AP]-P-G-G-P-Y-G-G-P-P. Positions 31 to 45 (HGGGQYGSGLPPGGG) are enriched in gly residues. Residues 59–70 (SAGGVPSGTPSG) are compositionally biased toward low complexity. EF-hand domains follow at residues 105–140 (NVDPEAYSWFQSVDADHSGYISLKELKQALVNSNWS), 146–174 (TCLMMINMFDKTKSGRIDVAGFSALWKFL), 172–207 (KFLQQWRNLFQQYDRDRSGSISSTELQQALSQMGYN), 208–244 (LSPQFTQLLVSRYCARSAIPAMQLDCFIKVCTQLQVL), and 245–274 (TEAFREKDTAVQGNIRLSFEDFVTMTASRM). Asp118, Asp120, Ser122, Tyr124, and Glu129 together coordinate Ca(2+). Positions 185, 187, 189, 191, and 196 each coordinate Ca(2+). A required for interaction with PDCD6 region spans residues 195-275 (TELQQALSQM…FVTMTASRML (81 aa)).

Heterodimer; heterodimerizes (via the EF-hand 5) with PDCD6. Dissociates from PDCD6 in presence of calcium. Post-translationally, ubiquitinated by the BCR(KLHL12) E3 ubiquitin ligase complex.

The protein localises to the cytoplasm. It localises to the endoplasmic reticulum. The protein resides in the membrane. It is found in the cytoplasmic vesicle. Its subcellular location is the COPII-coated vesicle membrane. Calcium-binding protein that acts as an adapter that bridges unrelated proteins or stabilizes weak protein-protein complexes in response to calcium. Together with PDCD6, acts as a calcium-dependent adapter for the BCR(KLHL12) complex, a complex involved in endoplasmic reticulum (ER)-Golgi transport by regulating the size of COPII coats. In response to cytosolic calcium increase, the heterodimer formed with PDCD6 interacts with, and bridges together the BCR(KLHL12) complex and SEC31 (SEC31A or SEC31B), promoting monoubiquitination of SEC31 and subsequent collagen export, which is required for neural crest specification. Its role in the heterodimer formed with PDCD6 is however unclear: some evidence shows that PEF1 and PDCD6 work together and promote association between PDCD6 and SEC31 in presence of calcium. Other reports show that PEF1 dissociates from PDCD6 in presence of calcium, and may act as a negative regulator of PDCD6. Also acts as a negative regulator of ER-Golgi transport; possibly by inhibiting interaction between PDCD6 and SEC31. The chain is Peflin from Mus musculus (Mouse).